A 404-amino-acid chain; its full sequence is uncharacterized protein (404 aa).

A run of 11 helical transmembrane segments spans residues 9–29, 36–56, 76–96, 103–123, 135–155, 162–182, 199–219, 236–256, 288–308, 319–339, and 366–386; these read IYLI…PYLS, GFGE…FIGL, LVVK…LLFC, IMFY…QLSI, FIQV…LEFY, KRIL…YLIY, AFFY…SFFI, LGLY…ILAI, IVPI…LFFL, IIVF…VNYL, and LIFT…LGIL.

Belongs to the polysaccharide synthase family. HI_0867/HI_1700 subfamily.

The protein localises to the cell membrane. This is an uncharacterized protein from Haemophilus influenzae (strain ATCC 51907 / DSM 11121 / KW20 / Rd).